The chain runs to 320 residues: Aurora kinase B (320 aa).

Residues 1 to 10 (MQNKENREPR) are compositionally biased toward basic and acidic residues. The tract at residues 1–38 (MQNKENREPRVQQTPSAGVGPLRVEMNPDTHAVSGPGR) is disordered. The Protein kinase domain occupies 53–303 (FDIGRPLGKG…LRSVMEHPWV (251 aa)). Residues 59–67 (LGKGKFGNV) and Lys82 each bind ATP. Asp176 functions as the Proton acceptor in the catalytic mechanism.

The protein belongs to the protein kinase superfamily. Ser/Thr protein kinase family. Aurora subfamily. In terms of assembly, component of the chromosomal passenger complex (CPC).

It is found in the nucleus. It localises to the chromosome. Its subcellular location is the centromere. The protein localises to the cytoplasm. The protein resides in the cytoskeleton. It is found in the spindle. It localises to the midbody. The enzyme catalyses L-seryl-[protein] + ATP = O-phospho-L-seryl-[protein] + ADP + H(+). It catalyses the reaction L-threonyl-[protein] + ATP = O-phospho-L-threonyl-[protein] + ADP + H(+). Its activity is regulated as follows. Kinase activity is stimulated by cell-cycle specific phosphorylation. Its function is as follows. Serine/threonine-protein kinase component of the chromosomal passenger complex (CPC), a complex that acts as a key regulator of mitosis. The CPC complex has essential functions at the centromere in ensuring correct chromosome alignment and segregation and is required for chromatin-induced microtubule stabilization and spindle assembly. Involved in the bipolar attachment of spindle microtubules to kinetochores and is a key regulator for the onset of cytokinesis during mitosis. Required for central/midzone spindle assembly and cleavage furrow formation. Key component of the cytokinesis checkpoint, a process required to delay abscission to prevent both premature resolution of intercellular chromosome bridges and accumulation of DNA damage. Phosphorylates 'Ser-10' of histone H3 during mitosis. The sequence is that of Aurora kinase B (aurkb) from Danio rerio (Zebrafish).